A 369-amino-acid chain; its full sequence is Pulmonary surfactant-associated protein D (369 aa).

The N-terminal stretch at 1 to 20 (MLLLPLSVLLLLTQPWRSLG) is a signal peptide. An S-nitrosocysteine mark is found at Cys35 and Cys40. Positions 41–215 (SPPEDGLPGR…ERGAKGESGL (175 aa)) are disordered. Residues 46 to 216 (GLPGRDGRDG…RGAKGESGLA (171 aa)) form the Collagen-like domain. Positions 47–65 (LPGRDGRDGREGPRGEKGD) are enriched in basic and acidic residues. Pro78 carries the 4-hydroxyproline modification. Position 87 is a 5-hydroxylysine (Lys87). N-linked (GlcNAc...) asparagine glycosylation occurs at Asn90. Pro96 bears the 4-hydroxyproline mark. Lys99 carries the 5-hydroxylysine modification. Over residues 139–148 (GPKGGVGAPG) the composition is skewed to gly residues. Residues Pro165 and Pro171 each carry the 4-hydroxyproline modification. Positions 165-191 (PGEPGAPGRAGAPGPAGAIGPQGPSGA) are enriched in low complexity. The segment covering 198–210 (KGDRGTPGERGAK) has biased composition (basic and acidic residues). Residues 217-248 (EVNALRQRVGILEGQLQRLQNAFSQYKKAMLF) adopt a coiled-coil conformation. Residues 254–369 (VGEKIFKTEG…GEQRLVICEF (116 aa)) enclose the C-type lectin domain. Cystine bridges form between Cys275/Cys367 and Cys345/Cys359.

It belongs to the SFTPD family. Oligomeric complex of 4 set of homotrimers. Post-translationally, hydroxylation on proline residues within the sequence motif, GXPG, is most likely to be 4-hydroxy as this fits the requirement for 4-hydroxylation in vertebrates. In terms of processing, S-nitrosylation at Cys-35 and Cys-40 alters the quaternary structure which results in a pro-inflammatory chemoattractive signaling activity with macrophages.

Its subcellular location is the secreted. The protein resides in the extracellular space. It localises to the extracellular matrix. It is found in the surface film. In terms of biological role, contributes to the lung's defense against inhaled microorganisms, organic antigens and toxins. Interacts with compounds such as bacterial lipopolysaccharides, oligosaccharides and fatty acids and modulates leukocyte action in immune response. May participate in the extracellular reorganization or turnover of pulmonary surfactant. Binds strongly maltose residues and to a lesser extent other alpha-glucosyl moieties. This is Pulmonary surfactant-associated protein D (SFTPD) from Bos taurus (Bovine).